The following is a 533-amino-acid chain: Na(+)/H(+) antiporter NhaB (533 aa).

11 helical membrane-spanning segments follow: residues I10–I30, P67–L87, V96–F116, V131–I165, L209–P229, I247–V267, A310–I330, E355–I375, L396–G416, A454–I474, and A485–L505.

This sequence belongs to the NhaB Na(+)/H(+) (TC 2.A.34) antiporter family.

It is found in the cell inner membrane. It catalyses the reaction 2 Na(+)(in) + 3 H(+)(out) = 2 Na(+)(out) + 3 H(+)(in). Its function is as follows. Na(+)/H(+) antiporter that extrudes sodium in exchange for external protons. The chain is Na(+)/H(+) antiporter NhaB from Shewanella oneidensis (strain ATCC 700550 / JCM 31522 / CIP 106686 / LMG 19005 / NCIMB 14063 / MR-1).